The primary structure comprises 839 residues: Enhancer of polycomb-like protein 1 (839 aa).

Disordered regions lie at residues 350-379 (QKKRKVEPKKEEKAEKASTPVRGGKAAGSA), 393-415 (GSGSPSVSSTHVPPNVSIPPSKI), 608-640 (LADRQKYDRETEPTRQMSSYDKDPSQLNGISSD), and 679-839 (QQQQ…KVDA). Basic and acidic residues predominate over residues 608 to 620 (LADRQKYDRETEP). Polar residues predominate over residues 621–640 (TRQMSSYDKDPSQLNGISSD). The segment covering 679-690 (QQQQQQMRNRQQ) has biased composition (low complexity). The span at 697–713 (PGAGLGGGQGAGGGAGG) shows a compositional bias: gly residues. The span at 714 to 730 (SRNNSPAPGTNGPQSKM) shows a compositional bias: polar residues. Positions 747–786 (QHQQYQQMQQQQQQQQQQQQQRKMGVAPMNAASAAAAMAA) are enriched in low complexity. A compositionally biased stretch (basic and acidic residues) spans 828–839 (MKQKSELAKVDA).

It belongs to the enhancer of polycomb family. As to quaternary structure, component of the NuA4 histone acetyltransferase complex.

It is found in the nucleus. Component of the NuA4 histone acetyltransferase complex which is involved in transcriptional activation of selected genes principally by acetylation of nucleosomal histone H4 and H2A. The NuA4 complex is also involved in DNA repair. Involved in gene silencing by neighboring heterochromatin, blockage of the silencing spreading along the chromosome, and required for cell cycle progression through G2/M. In Yarrowia lipolytica (strain CLIB 122 / E 150) (Yeast), this protein is Enhancer of polycomb-like protein 1 (EPL1).